The sequence spans 487 residues: Glycogen synthase (487 aa).

Lys23 provides a ligand contact to ADP-alpha-D-glucose.

Belongs to the glycosyltransferase 1 family. Bacterial/plant glycogen synthase subfamily.

The catalysed reaction is [(1-&gt;4)-alpha-D-glucosyl](n) + ADP-alpha-D-glucose = [(1-&gt;4)-alpha-D-glucosyl](n+1) + ADP + H(+). The protein operates within glycan biosynthesis; glycogen biosynthesis. Its function is as follows. Synthesizes alpha-1,4-glucan chains using ADP-glucose. The chain is Glycogen synthase from Pseudomonas fluorescens (strain Pf0-1).